The following is a 163-amino-acid chain: MAKKKKAKNSNPVIASNRKARHDYKILDTFECGIVLLGTEIKSIREGKVSLTDSFATIDEGEAWIRNLNIPIYSRGSWTNHSPMRTRKLLLHRREIDSLMGKVRDGNKTLVPLSLYFKEGRLKVELGLAQGKQDYDKRQDIKRRTEEREVVRDLGRRVKGIHA.

Belongs to the SmpB family.

It is found in the cytoplasm. Its function is as follows. Required for rescue of stalled ribosomes mediated by trans-translation. Binds to transfer-messenger RNA (tmRNA), required for stable association of tmRNA with ribosomes. tmRNA and SmpB together mimic tRNA shape, replacing the anticodon stem-loop with SmpB. tmRNA is encoded by the ssrA gene; the 2 termini fold to resemble tRNA(Ala) and it encodes a 'tag peptide', a short internal open reading frame. During trans-translation Ala-aminoacylated tmRNA acts like a tRNA, entering the A-site of stalled ribosomes, displacing the stalled mRNA. The ribosome then switches to translate the ORF on the tmRNA; the nascent peptide is terminated with the 'tag peptide' encoded by the tmRNA and targeted for degradation. The ribosome is freed to recommence translation, which seems to be the essential function of trans-translation. This is SsrA-binding protein from Corynebacterium diphtheriae (strain ATCC 700971 / NCTC 13129 / Biotype gravis).